A 377-amino-acid chain; its full sequence is GDP-mannose 3,5-epimerase (377 aa).

At glycine 2 the chain carries N-acetylglycine. NAD(+) is bound by residues 34-60 (GAGG…SDWK), aspartate 58, and aspartate 78. Substrate-binding positions include glycine 103 and 143 to 145 (SAC). The NAD(+) site is built by tyrosine 174 and lysine 178. Residue tyrosine 174 is the Proton acceptor of the active site. Substrate is bound by residues asparagine 203, 216–218 (EKA), lysine 225, 241–243 (QTR), arginine 306, and serine 356. The residue at position 369 (serine 369) is a Phosphoserine.

It belongs to the NAD(P)-dependent epimerase/dehydratase family. As to quaternary structure, homodimer. Interacts with chaperone Hsc70-3 protein, which may regulate epimerase activity. The cofactor is NAD(+).

It carries out the reaction GDP-alpha-D-mannose = GDP-beta-L-gulose. It catalyses the reaction GDP-beta-L-gulose = GDP-beta-L-galactose. It participates in cofactor biosynthesis; L-ascorbate biosynthesis via GDP-alpha-D-mannose pathway; L-ascorbate from GDP-alpha-D-mannose: step 1/5. With respect to regulation, inhibited by GDP and GDP-D-glucose. Catalyzes a reversible epimerization of GDP-D-mannose that precedes the committed step in the biosynthesis of vitamin C (L-ascorbate), resulting in the hydrolysis of the highly energetic glycosyl-pyrophosphoryl linkage. Able to catalyze 2 distinct epimerization reactions and can release both GDP-L-galactose and GDP-L-gulose from GDP-mannose. The chain is GDP-mannose 3,5-epimerase from Arabidopsis thaliana (Mouse-ear cress).